Reading from the N-terminus, the 80-residue chain is UPF0180 protein GK1051 (80 aa).

Belongs to the UPF0180 family.

The protein is UPF0180 protein GK1051 of Geobacillus kaustophilus (strain HTA426).